Here is a 721-residue protein sequence, read N- to C-terminus: Polyribonucleotide nucleotidyltransferase (721 aa).

The Mg(2+) site is built by Asp-511 and Asp-517. Positions 577–637 (PSTDFFHINP…SGVQAAREHI (61 aa)) constitute a KH domain. The region spanning 654 to 721 (GDIHKGIVKK…KGNKISLGIA (68 aa)) is the S1 motif domain.

Belongs to the polyribonucleotide nucleotidyltransferase family. It depends on Mg(2+) as a cofactor.

The protein resides in the cytoplasm. The catalysed reaction is RNA(n+1) + phosphate = RNA(n) + a ribonucleoside 5'-diphosphate. Functionally, involved in mRNA degradation. Catalyzes the phosphorolysis of single-stranded polyribonucleotides processively in the 3'- to 5'-direction. The protein is Polyribonucleotide nucleotidyltransferase of Sulfurimonas denitrificans (strain ATCC 33889 / DSM 1251) (Thiomicrospira denitrificans (strain ATCC 33889 / DSM 1251)).